Consider the following 152-residue polypeptide: Protein PLANT CADMIUM RESISTANCE 2 (152 aa).

Residues 57–79 traverse the membrane as a helical segment; sequence TAGALYALIAVVTGCACIYSCFY.

This sequence belongs to the cornifelin family. In terms of assembly, homooligomer. In terms of tissue distribution, expressed in roots, leaves, shoots, stems, flowers and siliques. In leaves, restricted mainly to the vascular tissue. Expressed in all cells in the root tip, in the vascular tissue and the epidermis in the elongation zone, and only in the epidermal cells in the root hair zone.

The protein resides in the cell membrane. In terms of biological role, zinc transporter acting in both zinc extrusion and long-distance zinc transport. Involved in the loading of zinc into the xyleme and in the detoxification of excess zinc at the epidermal cells. Acts independently from the zinc transporters HMA2 and HMA4. May be also involved in cadmium resistance. This is Protein PLANT CADMIUM RESISTANCE 2 (PCR2) from Arabidopsis thaliana (Mouse-ear cress).